Consider the following 193-residue polypeptide: dCTP deaminase (193 aa).

DCTP is bound by residues 110 to 115, D128, 136 to 138, Y171, K178, and Q182; these read RSSLAR and VLE. E138 functions as the Proton donor/acceptor in the catalytic mechanism.

Belongs to the dCTP deaminase family. Homotrimer.

The catalysed reaction is dCTP + H2O + H(+) = dUTP + NH4(+). Its pathway is pyrimidine metabolism; dUMP biosynthesis; dUMP from dCTP (dUTP route): step 1/2. Its function is as follows. Catalyzes the deamination of dCTP to dUTP. The chain is dCTP deaminase from Escherichia coli (strain K12 / MC4100 / BW2952).